The primary structure comprises 57 residues: MPSSKKKKENVPVMSMAGLIRYYEEEHEKYKVDPIYVIIASIVLVAVVVAVTKIIPP.

At 1-33 (MPSSKKKKENVPVMSMAGLIRYYEEEHEKYKVD) the chain is on the cytoplasmic side. Residues 34–55 (PIYVIIASIVLVAVVVAVTKII) traverse the membrane as a helical segment. Residues 56–57 (PP) lie on the Extracellular side of the membrane.

This sequence belongs to the SEC61-beta family. In terms of assembly, component of the protein translocase complex. Heterotrimer consisting of alpha (SecY), beta (SecG) and gamma (SecE) subunits. Can form oligomers of the heterotrimer.

The protein resides in the cell membrane. Functionally, involved in protein export. The function of the beta subunit is unknown, but it may be involved in stabilization of the trimeric complex. The sequence is that of Preprotein translocase subunit SecG from Metallosphaera sedula (strain ATCC 51363 / DSM 5348 / JCM 9185 / NBRC 15509 / TH2).